The sequence spans 297 residues: Tumor necrosis factor receptor superfamily member 27 (297 aa).

The Extracellular portion of the chain corresponds to 1 to 138; that stretch reads MDCQENEYRD…AHTVPPREAT (138 aa). 3 TNFR-Cys repeats span residues 2-41, 43-83, and 85-118; these read DCQE…DAHC, VCPP…NAIC, and DCLP…EVQC. 8 cysteine pairs are disulfide-bonded: Cys3–Cys15, Cys18–Cys31, Cys21–Cys41, Cys44–Cys58, Cys61–Cys75, Cys64–Cys83, Cys86–Cys104, and Cys107–Cys118. N-linked (GlcNAc...) asparagine glycans are attached at residues Asn74 and Asn77. Residues 139–159 traverse the membrane as a helical; Signal-anchor for type III membrane protein segment; that stretch reads LVALVGSLLVVFALAFLGLFF. Residues 160–297 are Cytoplasmic-facing; that stretch reads LYCKQIFNRH…LYVPFEVPSL (138 aa).

As to quaternary structure, associates with TRAF1, TRAF3 and TRAF6.

The protein resides in the membrane. Functionally, receptor for EDA isoform A2, but not for EDA isoform A1. Mediates the activation of the NF-kappa-B and JNK pathways. Activation seems to be mediated by binding to TRAF3 and TRAF6. This chain is Tumor necrosis factor receptor superfamily member 27 (Eda2r), found in Mus musculus (Mouse).